The following is a 477-amino-acid chain: Peroxisome proliferator-activated receptor gamma (477 aa).

The residue at position 87 (serine 87) is a Phosphoserine; by MAPK. Residues 110–184 constitute a DNA-binding region (nuclear receptor); the sequence is AIECRVCGDK…VGMSHNAIRF (75 aa). 2 consecutive NR C4-type zinc fingers follow at residues 113–133 and 150–172; these read CRVCGDKASGFHYGVHACEGC and CDLNCRIHKKSRNKCQFCRFQKC. Residues 231–281 form a disordered region; that stretch reads TKAKAPGHPDGQSHRQNSRGYTRHELADDGGGSDQGAVREPRAEQGGGDSN. The 224-residue stretch at 252-475 folds into the NR LBD domain; that stretch reads TRHELADDGG…HPLLQEIYKD (224 aa). Residues 467-475 carry the 9aaTAD motif; the sequence is PLLQEIYKD.

It belongs to the nuclear hormone receptor family. NR1 subfamily. As to quaternary structure, heterodimer with the retinoid X receptor. As to expression, expressed mainly in adipose tissue and kidney.

Its subcellular location is the nucleus. It localises to the cytoplasm. In terms of biological role, receptor that binds peroxisome proliferators such as hypolipidemic drugs and fatty acids. Once activated by a ligand, the receptor binds to a promoter element in the gene for acyl-CoA oxidase and activates its transcription. It therefore controls the peroxisomal beta-oxidation pathway of fatty acids. Key regulator of adipocyte differentiation and glucose homeostasis. May play a role in the regulation of circadian rhythm. The sequence is that of Peroxisome proliferator-activated receptor gamma (pparg) from Xenopus laevis (African clawed frog).